The sequence spans 184 residues: Photosystem I assembly protein Ycf4 (184 aa).

Helical transmembrane passes span N21–Y43 and F68–S90.

It belongs to the Ycf4 family.

The protein resides in the plastid. It localises to the chloroplast thylakoid membrane. Seems to be required for the assembly of the photosystem I complex. The polypeptide is Photosystem I assembly protein Ycf4 (Physcomitrium patens (Spreading-leaved earth moss)).